The following is a 161-amino-acid chain: SsrA-binding protein (161 aa).

It belongs to the SmpB family.

It localises to the cytoplasm. Its function is as follows. Required for rescue of stalled ribosomes mediated by trans-translation. Binds to transfer-messenger RNA (tmRNA), required for stable association of tmRNA with ribosomes. tmRNA and SmpB together mimic tRNA shape, replacing the anticodon stem-loop with SmpB. tmRNA is encoded by the ssrA gene; the 2 termini fold to resemble tRNA(Ala) and it encodes a 'tag peptide', a short internal open reading frame. During trans-translation Ala-aminoacylated tmRNA acts like a tRNA, entering the A-site of stalled ribosomes, displacing the stalled mRNA. The ribosome then switches to translate the ORF on the tmRNA; the nascent peptide is terminated with the 'tag peptide' encoded by the tmRNA and targeted for degradation. The ribosome is freed to recommence translation, which seems to be the essential function of trans-translation. This Vibrio parahaemolyticus serotype O3:K6 (strain RIMD 2210633) protein is SsrA-binding protein.